The primary structure comprises 355 residues: C-C chemokine receptor type 1 (355 aa).

Residues 1–34 (METPDTTENYDMITEFDYGDATPCHKVNERAILA) are Extracellular-facing. A helical membrane pass occupies residues 35–60 (QLLPPLYSLVFVIGVVGNLLVVLVLV). At 61–64 (QYKR) the chain is on the cytoplasmic side. A helical membrane pass occupies residues 65 to 91 (LKNMTNIYLLNLAISDLLFLFTLPFLI). Topologically, residues 92–107 (YYKSTDDWIFGDAMCK) are extracellular. Cysteine 106 and cysteine 183 are disulfide-bonded. The chain crosses the membrane as a helical span at residues 108–129 (ILSGFYYTGLYSEIFFIILLTI). The Cytoplasmic portion of the chain corresponds to 130–146 (DRYLAIVHAVFALRART). Residues 147–171 (VTFGVITSIIIWALAILASSPLMYF) traverse the membrane as a helical segment. Residues 172 to 197 (SKTQWNIVRHSCNLHFPYESFQQWKL) lie on the Extracellular side of the membrane. A helical membrane pass occupies residues 198-223 (FQALKLNLFGLVLPLLVMIVCYTGII). Residues 224–239 (KILLRRPNEKKSKAVR) are Cytoplasmic-facing. A helical membrane pass occupies residues 240 to 264 (LIFVIMIIFFLFWTPYNLTELISVF). The Extracellular portion of the chain corresponds to 265-281 (QEFLFTHLCEQNRQLDL). A helical transmembrane segment spans residues 282–305 (AMEVTEVIANMHCCVNPVIYAFAG). Residues 306–355 (ERFRKYLRQLFHRRVAVHLVKWLPFLSGDRLERVSSTSPSTGEHELSAGL) lie on the Cytoplasmic side of the membrane.

The protein belongs to the G-protein coupled receptor 1 family. In terms of assembly, interacts with CREB3. Interacts with CCL3. Interacts with CCL15. Interacts with CCL23. Interacts with GNAI1. Interacts with PF4/CXCL4.

It localises to the cell membrane. Chemokine receptor that plays a crucial role in regulating immune cell migration, inflammation, and immune responses. Contributes to the inflammatory response by recruiting immune cells, such as monocytes, macrophages, T-cells, and dendritic cells, to sites of inflammation for the clearance of pathogens and the resolution of tissue damage. When activated by its ligands including CCL3, CCL5-9, CCL13-16 and CCL23, triggers a signaling cascade within immune cells, leading to their migration towards the source of the chemokine. For example, mediates neutrophil migration after activation by CCL3 leading to the sequential release of TNF-alpha and leukotriene B4. Also mediates monocyte migration upon CXCL4 binding. Activation by CCL5 results in neuroinflammation through the ERK1/2 signaling pathway. In Macaca fascicularis (Crab-eating macaque), this protein is C-C chemokine receptor type 1 (CCR1).